Consider the following 262-residue polypeptide: ClpXP adapter protein SpxH (262 aa).

The protein belongs to the SpxH family. As to quaternary structure, interacts with Spx.

The protein resides in the cytoplasm. In terms of biological role, adapter protein required for efficient degradation of Spx by ClpXP under non-stress conditions. Interaction with Spx stabilizes Spx and exposes the C-terminus of Spx for recognition and proteolysis by ClpXP. This Staphylococcus saprophyticus subsp. saprophyticus (strain ATCC 15305 / DSM 20229 / NCIMB 8711 / NCTC 7292 / S-41) protein is ClpXP adapter protein SpxH.